We begin with the raw amino-acid sequence, 261 residues long: X-box-binding protein 1 (261 aa).

Over 1 to 185 the chain is Cytoplasmic; the sequence is MVVVAAAPNP…VQAQLSPLQN (185 aa). The disordered stretch occupies residues 44–93; sequence RGASPEAASGGLPQARKRQRLTHLSPEEKALRRKLKNRVAAQTARDRKKA. A phosphoserine mark is found at S47 and S68. A bZIP domain is found at 70 to 133; the sequence is EEKALRRKLK…HGLVVENQEL (64 aa). Residues 72 to 94 are basic motif; the sequence is KALRRKLKNRVAAQTARDRKKAR. The interval 75-92 is nuclear localization signal (NLS); in isoforms 1 and isoform 2; sequence RRKLKNRVAAQTARDRKK. The segment at 98–133 is leucine-zipper; sequence LEQQVVDLEEENQKLLLENQLLREKTHGLVVENQEL. A helical; Signal-anchor for type II membrane protein transmembrane segment spans residues 186–203; it reads ISPWILAVLTLQIQSLIS. At 204–261 the chain is on the lumenal side; the sequence is CWAFWTTWTQSCSSNALPQSLPAWRSSQRSTQKDPVPYQPPFLCQWGRHQPSWKPLMN. Residues 235 to 261 are necessary for the translational pausing of its own mRNA; the sequence is QKDPVPYQPPFLCQWGRHQPSWKPLMN.

This sequence belongs to the bZIP family. In terms of assembly, isoform 2 interacts with SIRT1. Isoform 2 interacts with PIK3R1 and PIK3R2; the interactions are direct and induce translocation of XBP1 isoform 2 into the nucleus and the unfolded protein response (UPR) XBP1-dependent target genes activation in a ER stress- and/or insulin-dependent but PI3K-independent manner. Isoform 2 interacts with FOXO1; the interaction is direct and leads to FOXO1 ubiquitination and degradation via the proteasome pathway in hepatocytes. Isoform 1 interacts with HM13. Isoform 1 interacts with RNF139; the interaction induces ubiquitination and degradation of isoform 1. Isoform 1 interacts (via luminal domain) with DERL1; the interaction obviates the need for ectodomain shedding prior HM13/SPP-mediated XBP1 isoform 1 cleavage. Isoform 1 interacts with isoform 2; the interaction sequesters isoform 2 from the nucleus and enhances isoform 2 degradation in the cytoplasm. Isoform 1 interacts with HDAC3 and AKT1; the interactions occur in endothelial cell (EC) under disturbed flow. Isoform 1 interacts with the oncoprotein FOS. Isoform 2 interacts with ATF6; the interaction occurs in a ER stress-dependent manner and is required for DNA binding to the unfolded protein response element (UPRE). Isoform 2 interacts with PIK3R1; the interaction is direct and induces translocation of XBP1 isoform 2 into the nucleus and the unfolded protein response (UPR) XBP1-dependent target genes activation in a ER stress- and/or insulin-dependent but PI3K-independent manner. In terms of processing, acetylated by EP300; acetylation positively regulates the transcriptional activity of XBP1 isoform 2. Isoform 2 is deacetylated by SIRT1; deacetylation negatively regulates the transcriptional activity of XBP1 isoform 2. Post-translationally, ubiquitinated, leading to proteasome-mediated degradation in response to ER stress. X-box-binding protein 1, cytoplasmic form and luminal form are produced by intramembrane proteolytic cleavage of ER membrane-anchored isoform 1 triggered by HM13/SPP in a DERL1-RNF139-dependent and VCP/p97-independent manner. X-box-binding protein 1, luminal form is ubiquitinated leading to proteasomal degradation. In terms of tissue distribution, expressed in plasma cells in rheumatoid synovium. Over-expressed in primary breast cancer and metastatic breast cancer cells. Isoform 1 and isoform 2 are expressed at higher level in proliferating as compared to confluent quiescent endothelial cells.

Its subcellular location is the endoplasmic reticulum. It is found in the nucleus. The protein resides in the cytoplasm. The protein localises to the endoplasmic reticulum membrane. It localises to the membrane. In terms of biological role, functions as a transcription factor during endoplasmic reticulum (ER) stress by regulating the unfolded protein response (UPR). Required for cardiac myogenesis and hepatogenesis during embryonic development, and the development of secretory tissues such as exocrine pancreas and salivary gland. Involved in terminal differentiation of B lymphocytes to plasma cells and production of immunoglobulins. Modulates the cellular response to ER stress in a PIK3R-dependent manner. Binds to the cis-acting X box present in the promoter regions of major histocompatibility complex class II genes. Involved in VEGF-induced endothelial cell (EC) proliferation and retinal blood vessel formation during embryonic development but also for angiogenesis in adult tissues under ischemic conditions. Also functions as a major regulator of the UPR in obesity-induced insulin resistance and type 2 diabetes for the management of obesity and diabetes prevention. Its function is as follows. Plays a role in the unconventional cytoplasmic splicing processing of its own mRNA triggered by the endoplasmic reticulum (ER) transmembrane endoribonuclease ERN1: upon ER stress, the emerging XBP1 polypeptide chain, as part of a mRNA-ribosome-nascent chain (R-RNC) complex, cotranslationally recruits its own unprocessed mRNA through transient docking to the ER membrane and translational pausing, therefore facilitating efficient IRE1-mediated XBP1 mRNA isoform 2 production. In endothelial cells (EC), associated with KDR, promotes IRE1-mediated XBP1 mRNA isoform 2 productions in a vascular endothelial growth factor (VEGF)-dependent manner, leading to EC proliferation and angiogenesis. Functions as a negative feed-back regulator of the potent transcription factor XBP1 isoform 2 protein levels through proteasome-mediated degradation, thus preventing the constitutive activation of the ER stress response signaling pathway. Inhibits the transactivation activity of XBP1 isoform 2 in myeloma cells. Acts as a weak transcriptional factor. Together with HDAC3, contributes to the activation of NFE2L2-mediated HMOX1 transcription factor gene expression in a PI(3)K/mTORC2/Akt-dependent signaling pathway leading to EC survival under disturbed flow/oxidative stress. Binds to the ER stress response element (ERSE) upon ER stress. Binds to the consensus 5'-GATGACGTG[TG]N(3)[AT]T-3' sequence related to cAMP responsive element (CRE)-like sequences. Binds the Tax-responsive element (TRE) present in the long terminal repeat (LTR) of T-cell leukemia virus type 1 (HTLV-I) and to the TPA response elements (TRE). Associates preferentially to the HDAC3 gene promoter region in a static flow-dependent manner. Binds to the CDH5/VE-cadherin gene promoter region. Functions as a stress-inducible potent transcriptional activator during endoplasmic reticulum (ER) stress by inducing unfolded protein response (UPR) target genes via binding to the UPR element (UPRE). Up-regulates target genes encoding ER chaperones and ER-associated degradation (ERAD) components to enhance the capacity of productive folding and degradation mechanism, respectively, in order to maintain the homeostasis of the ER under ER stress. Plays a role in the production of immunoglobulins and interleukin-6 in the presence of stimuli required for plasma cell differentiation. Induces phospholipid biosynthesis and ER expansion. Contributes to the VEGF-induced endothelial cell (EC) growth and proliferation in a Akt/GSK-dependent and/or -independent signaling pathway, respectively, leading to beta-catenin nuclear translocation and E2F2 gene expression. Promotes umbilical vein EC apoptosis and atherosclerotisis development in a caspase-dependent signaling pathway, and contributes to VEGF-induced EC proliferation and angiogenesis in adult tissues under ischemic conditions. Involved in the regulation of endostatin-induced autophagy in EC through BECN1 transcriptional activation. Plays a role as an oncogene by promoting tumor progression: stimulates zinc finger protein SNAI1 transcription to induce epithelial-to-mesenchymal (EMT) transition, cell migration and invasion of breast cancer cells. Involved in adipocyte differentiation by regulating lipogenic gene expression during lactation. Plays a role in the survival of both dopaminergic neurons of the substantia nigra pars compacta (SNpc), by maintaining protein homeostasis and of myeloma cells. Increases insulin sensitivity in the liver as a response to a high carbohydrate diet, resulting in improved glucose tolerance. Also improves glucose homeostasis in an ER stress- and/or insulin-independent manner through both binding and proteasome-induced degradation of the transcription factor FOXO1, hence resulting in suppression of gluconeogenic genes expression and in a reduction of blood glucose levels. Controls the induction of de novo fatty acid synthesis in hepatocytes by regulating the expression of a subset of lipogenic genes in an ER stress- and UPR-independent manner. Associates preferentially to the HDAC3 gene promoter region in a disturbed flow-dependent manner. Binds to the BECN1 gene promoter region. Binds to the CDH5/VE-cadherin gene promoter region. Binds to the ER stress response element (ERSE) upon ER stress. Binds to the 5'-CCACG-3' motif in the PPARG promoter. The sequence is that of X-box-binding protein 1 from Homo sapiens (Human).